Reading from the N-terminus, the 121-residue chain is Cell division protein FtsB (121 aa).

The Cytoplasmic segment spans residues 1 to 6 (MRNWRW). Residues 7–24 (LLLVLAVLLAWLQYRFWF) traverse the membrane as a helical segment. Over 25–121 (GPGNSGEVMM…PASTDPVDHP (97 aa)) the chain is Periplasmic. Positions 31–66 (EVMMLEAQVAHQTQDNEGLRQRNQALAAEVKDLKDG) form a coiled coil. The tract at residues 94-121 (APLPAPASPETAAPAQQAPASTDPVDHP) is disordered. The segment covering 101 to 121 (SPETAAPAQQAPASTDPVDHP) has biased composition (low complexity).

The protein belongs to the FtsB family. In terms of assembly, part of a complex composed of FtsB, FtsL and FtsQ.

It localises to the cell inner membrane. Its function is as follows. Essential cell division protein. May link together the upstream cell division proteins, which are predominantly cytoplasmic, with the downstream cell division proteins, which are predominantly periplasmic. This Xanthomonas oryzae pv. oryzae (strain MAFF 311018) protein is Cell division protein FtsB.